The following is a 222-amino-acid chain: UPF0502 protein XCV4380 (222 aa).

The protein belongs to the UPF0502 family.

In Xanthomonas euvesicatoria pv. vesicatoria (strain 85-10) (Xanthomonas campestris pv. vesicatoria), this protein is UPF0502 protein XCV4380.